A 460-amino-acid polypeptide reads, in one-letter code: Citrate synthase, peroxisomal (460 aa).

Ser21 is modified (phosphoserine). Glycyl lysine isopeptide (Lys-Gly) (interchain with G-Cter in ubiquitin) cross-links involve residues Lys218 and Lys239. Residues His293 and His339 contribute to the active site. Glycyl lysine isopeptide (Lys-Gly) (interchain with G-Cter in ubiquitin) cross-links involve residues Lys354 and Lys385. Asp394 is an active-site residue. Positions 458–460 (SKL) match the C-terminal peroxisome targeting signal (PTS1) motif.

This sequence belongs to the citrate synthase family. As to quaternary structure, interacts with F-box protein UCC1. Ubiquitinated by the E3 ubiquitin-protein ligase complex SCF(UCC1), which leads to its degradation by the proteasome. Ubiquitination is prevented by oxaloacetate, suggesting the existence of an oxaloacetate-dependent positive feedback loop that stabilizes CIT2.

It is found in the cytoplasm. It localises to the peroxisome. It carries out the reaction oxaloacetate + acetyl-CoA + H2O = citrate + CoA + H(+). Its pathway is carbohydrate metabolism; tricarboxylic acid cycle; isocitrate from oxaloacetate: step 1/2. Peroxisomal citrate synthase involved in the citrate homeostasis. Catalyzes the condensation of acetyl coenzyme A and oxaloacetate to form citrate. Citrate synthase is the rate-limiting enzyme of the tricarboxylic acid (TCA) cycle. The chain is Citrate synthase, peroxisomal from Saccharomyces cerevisiae (strain ATCC 204508 / S288c) (Baker's yeast).